An 88-amino-acid chain; its full sequence is Molybdopterin synthase sulfur carrier subunit (88 aa).

Position 88 is a 1-thioglycine; alternate (Gly-88). Gly-88 is subject to Glycyl adenylate; alternate.

It belongs to the MoaD family. MOCS2A subfamily. In terms of assembly, heterotetramer; composed of 2 small (MOCS2A) and 2 large (MOCS2B) subunits. In terms of processing, C-terminal thiocarboxylation occurs in 2 steps, it is first acyl-adenylated (-COAMP) via the hesA/moeB/thiF part of MOCS3, then thiocarboxylated (-COSH) via the rhodanese domain of MOCS3.

The protein localises to the cytoplasm. Its subcellular location is the cytosol. It functions in the pathway cofactor biosynthesis; molybdopterin biosynthesis. Its function is as follows. Acts as a sulfur carrier required for molybdopterin biosynthesis. Component of the molybdopterin synthase complex that catalyzes the conversion of precursor Z into molybdopterin by mediating the incorporation of 2 sulfur atoms into precursor Z to generate a dithiolene group. In the complex, serves as sulfur donor by being thiocarboxylated (-COSH) at its C-terminus by MOCS3. After interaction with MOCS2B, the sulfur is then transferred to precursor Z to form molybdopterin. The protein is Molybdopterin synthase sulfur carrier subunit of Mus musculus (Mouse).